Here is a 351-residue protein sequence, read N- to C-terminus: UDP-N-acetylglucosamine--N-acetylmuramyl-(pentapeptide) pyrophosphoryl-undecaprenol N-acetylglucosamine transferase (351 aa).

Residues 13 to 15 (TGG), N125, R161, S189, I241, 260 to 265 (ALTVCE), and Q285 each bind UDP-N-acetyl-alpha-D-glucosamine.

The protein belongs to the glycosyltransferase 28 family. MurG subfamily.

The protein localises to the cell inner membrane. It carries out the reaction di-trans,octa-cis-undecaprenyl diphospho-N-acetyl-alpha-D-muramoyl-L-alanyl-D-glutamyl-meso-2,6-diaminopimeloyl-D-alanyl-D-alanine + UDP-N-acetyl-alpha-D-glucosamine = di-trans,octa-cis-undecaprenyl diphospho-[N-acetyl-alpha-D-glucosaminyl-(1-&gt;4)]-N-acetyl-alpha-D-muramoyl-L-alanyl-D-glutamyl-meso-2,6-diaminopimeloyl-D-alanyl-D-alanine + UDP + H(+). The protein operates within cell wall biogenesis; peptidoglycan biosynthesis. In terms of biological role, cell wall formation. Catalyzes the transfer of a GlcNAc subunit on undecaprenyl-pyrophosphoryl-MurNAc-pentapeptide (lipid intermediate I) to form undecaprenyl-pyrophosphoryl-MurNAc-(pentapeptide)GlcNAc (lipid intermediate II). This is UDP-N-acetylglucosamine--N-acetylmuramyl-(pentapeptide) pyrophosphoryl-undecaprenol N-acetylglucosamine transferase from Haemophilus influenzae (strain ATCC 51907 / DSM 11121 / KW20 / Rd).